The sequence spans 572 residues: FAD-linked oxidoreductase patO (572 aa).

The N-terminal stretch at 1-23 (MRLSIYSSILLLRAMCLVRPTFG) is a signal peptide. Residues N48, N71, N126, N180, N309, N354, N381, N422, N446, and N481 are each glycosylated (N-linked (GlcNAc...) asparagine). In terms of domain architecture, FAD-binding PCMH-type spans 115–295 (CAPGDMVVYS…YSMTVKAFPD (181 aa)).

Belongs to the oxygen-dependent FAD-linked oxidoreductase family. It depends on FAD as a cofactor.

It localises to the vacuole lumen. Its pathway is mycotoxin biosynthesis; patulin biosynthesis. In terms of biological role, FAD-linked oxidoreductase; part of the gene cluster that mediates the biosynthesis of patulin, an acetate-derived tetraketide mycotoxin produced by several fungal species that shows antimicrobial properties against several bacteria. PatO acts with patJ in the vacuole to convert gentisyl alcohol to isoepoxydon. The pathway begins with the synthesis of 6-methylsalicylic acid by the polyketide synthase (PKS) patK via condensation of acetate and malonate units. The 6-methylsalicylic acid decarboxylase patG then catalyzes the decarboxylation of 6-methylsalicylic acid to yield m-cresol (also known as 3-methylphenol). These first reactions occur in the cytosol. The intermediate m-cresol is then transported into the endoplasmic reticulum where the cytochrome P450 monooxygenase patH converts it to m-hydroxybenzyl alcohol, which is further converted to gentisyl alcohol by the cytochrome P450 monooxygenase patI. The oxidoreductases patJ and patO further convert gentisyl alcohol to isoepoxydon in the vacuole. PatN catalyzes then the transformation of isoepoxydon into phyllostine. The cluster protein patF is responsible for the conversion from phyllostine to neopatulin whereas the alcohol dehydrogenase patD converts neopatulin to E-ascladiol. The steps between isoepoxydon and E-ascladiol occur in the cytosol, and E-ascladiol is probably secreted to the extracellular space by one of the cluster-specific transporters patC or patM. Finally, the secreted patulin synthase patE catalyzes the conversion of E-ascladiol to patulin. The protein is FAD-linked oxidoreductase patO of Aspergillus clavatus (strain ATCC 1007 / CBS 513.65 / DSM 816 / NCTC 3887 / NRRL 1 / QM 1276 / 107).